We begin with the raw amino-acid sequence, 699 residues long: DNA ligase (699 aa).

NAD(+) contacts are provided by residues 47-51 (DAQYD), 96-97 (SL), and Glu-128. Lys-130 functions as the N6-AMP-lysine intermediate in the catalytic mechanism. Residues Arg-151, Glu-186, Lys-303, and Lys-327 each contribute to the NAD(+) site. Residues Cys-422, Cys-425, Cys-440, and Cys-446 each contribute to the Zn(2+) site. Positions 620-699 (GDNLLLSNQT…EEWIKMVNEL (80 aa)) constitute a BRCT domain.

This sequence belongs to the NAD-dependent DNA ligase family. LigA subfamily. Requires Mg(2+) as cofactor. Mn(2+) serves as cofactor.

The enzyme catalyses NAD(+) + (deoxyribonucleotide)n-3'-hydroxyl + 5'-phospho-(deoxyribonucleotide)m = (deoxyribonucleotide)n+m + AMP + beta-nicotinamide D-nucleotide.. Its function is as follows. DNA ligase that catalyzes the formation of phosphodiester linkages between 5'-phosphoryl and 3'-hydroxyl groups in double-stranded DNA using NAD as a coenzyme and as the energy source for the reaction. It is essential for DNA replication and repair of damaged DNA. This Orientia tsutsugamushi (strain Ikeda) (Rickettsia tsutsugamushi) protein is DNA ligase.